A 422-amino-acid polypeptide reads, in one-letter code: UDP-N-acetylglucosamine 1-carboxyvinyltransferase (422 aa).

22-23 (KN) provides a ligand contact to phosphoenolpyruvate. Arg93 is a binding site for UDP-N-acetyl-alpha-D-glucosamine. Catalysis depends on Cys117, which acts as the Proton donor. At Cys117 the chain carries 2-(S-cysteinyl)pyruvic acid O-phosphothioketal. UDP-N-acetyl-alpha-D-glucosamine-binding positions include 122-126 (RPVDQ), Asp305, and Ile327.

This sequence belongs to the EPSP synthase family. MurA subfamily.

It is found in the cytoplasm. It catalyses the reaction phosphoenolpyruvate + UDP-N-acetyl-alpha-D-glucosamine = UDP-N-acetyl-3-O-(1-carboxyvinyl)-alpha-D-glucosamine + phosphate. Its pathway is cell wall biogenesis; peptidoglycan biosynthesis. Functionally, cell wall formation. Adds enolpyruvyl to UDP-N-acetylglucosamine. This Bordetella parapertussis (strain 12822 / ATCC BAA-587 / NCTC 13253) protein is UDP-N-acetylglucosamine 1-carboxyvinyltransferase.